The following is a 140-amino-acid chain: Putative pre-16S rRNA nuclease (140 aa).

Belongs to the YqgF nuclease family.

The protein resides in the cytoplasm. In terms of biological role, could be a nuclease involved in processing of the 5'-end of pre-16S rRNA. The protein is Putative pre-16S rRNA nuclease of Yersinia pseudotuberculosis serotype IB (strain PB1/+).